Reading from the N-terminus, the 208-residue chain is N-(5'-phosphoribosyl)anthranilate isomerase (208 aa).

It belongs to the TrpF family.

It carries out the reaction N-(5-phospho-beta-D-ribosyl)anthranilate = 1-(2-carboxyphenylamino)-1-deoxy-D-ribulose 5-phosphate. It participates in amino-acid biosynthesis; L-tryptophan biosynthesis; L-tryptophan from chorismate: step 3/5. This Desulforamulus reducens (strain ATCC BAA-1160 / DSM 100696 / MI-1) (Desulfotomaculum reducens) protein is N-(5'-phosphoribosyl)anthranilate isomerase.